We begin with the raw amino-acid sequence, 207 residues long: Small ribosomal subunit protein uS4 (207 aa).

One can recognise an S4 RNA-binding domain in the interval 97-160 (SRLDNVVYRM…KKQARIVEAL (64 aa)).

This sequence belongs to the universal ribosomal protein uS4 family. In terms of assembly, part of the 30S ribosomal subunit. Contacts protein S5. The interaction surface between S4 and S5 is involved in control of translational fidelity.

One of the primary rRNA binding proteins, it binds directly to 16S rRNA where it nucleates assembly of the body of the 30S subunit. In terms of biological role, with S5 and S12 plays an important role in translational accuracy. This is Small ribosomal subunit protein uS4 from Burkholderia pseudomallei (strain 1106a).